Reading from the N-terminus, the 227-residue chain is Transmembrane emp24 domain-containing protein 1 (227 aa).

A signal peptide spans 1-23 (MMAAGAALALALWLLMPPVGVGG). Topologically, residues 24 to 194 (AGPPPIQDGE…LQEGNLERVN (171 aa)) are extracellular. The GOLD domain occupies 43–125 (KQCFYQSAPA…EKLVFFELIF (83 aa)). Positions 145-170 (EMLDVKMEDIKESIETMRTRLERSIQ) form a coiled coil. A helical membrane pass occupies residues 195–215 (FWSAVNVAVLLLVAVLQVCTL). Residues 216-227 (KRFFQDKRPVPT) are Cytoplasmic-facing. The short motif at 218–219 (FF) is the COPII vesicle coat-binding element. The COPI vesicle coat-binding motif lies at 218–227 (FFQDKRPVPT).

It belongs to the EMP24/GP25L family. As to quaternary structure, homodimer in endoplasmic reticulum, endoplasmic reticulum-Golgi intermediate compartment and cis-Golgi network. Interacts with IL1RL1. Interacts with RNF26; this interaction is important to modulate innate immune signaling through the cGAS-STING pathway.

Its subcellular location is the cell membrane. The protein localises to the endoplasmic reticulum membrane. It is found in the golgi apparatus. It localises to the cis-Golgi network membrane. The protein resides in the endoplasmic reticulum-Golgi intermediate compartment membrane. Its function is as follows. Potential role in vesicular protein trafficking, mainly in the early secretory pathway. May act as a cargo receptor at the lumenal side for incorporation of secretory cargo molecules into transport vesicles and may be involved in vesicle coat formation at the cytoplasmic side. Plays a positive role in IL-33-mediated IL-8 and IL-6 production by interacting with interleukin-33 receptor IL1RL1. Plays also a role in the modulation of innate immune signaling through the cGAS-STING pathway by interacting with RNF26. In Pongo abelii (Sumatran orangutan), this protein is Transmembrane emp24 domain-containing protein 1 (TMED1).